Here is a 129-residue protein sequence, read N- to C-terminus: N16.5 matrix protein (129 aa).

The first 23 residues, 1–23 (MTCTLRWTITALVLLGICHLARP), serve as a signal peptide directing secretion. Tandem repeats lie at residues 91-92 (NG), 93-94 (NG), 95-96 (NG), 97-98 (NG), and 99-100 (NG). The segment at 91 to 100 (NGNGNGNGNG) is 5 X 2 AA tandem repeats of N-G.

Belongs to the N16 matrix protein family. In terms of assembly, heterooligomer; disulfide-linked. Pif97, Pif80, N16 and other proteins form a complex. As to expression, component of conchiolin, the organic matrix of nacre. Specifically expressed in mantle epithelium.

The protein localises to the secreted. It is found in the extracellular space. Its subcellular location is the extracellular matrix. Its function is as follows. May be specifically involved in the formation of the nacreous layer. This chain is N16.5 matrix protein, found in Pinctada fucata (Akoya pearl oyster).